The chain runs to 243 residues: Myelin protein P0 (243 aa).

Positions 1 to 26 are cleaved as a signal peptide; that stretch reads MESSGLRAPCSLLVLLSALVLPPTLA. The Ig-like V-type domain occupies 27-141; it reads IEVYTDREVY…VGKSSYVHLQ (115 aa). Over 27–154 the chain is Extracellular; that stretch reads IEVYTDREVY…KGAARAGLVL (128 aa). A disulfide bridge connects residues Cys-47 and Cys-123. The N-linked (GlcNAc...) asparagine glycan is linked to Asn-118. The chain crosses the membrane as a helical span at residues 155–175; that stretch reads GIIIAVALALVIVVTILILLI. Residues 176–243 are Cytoplasmic-facing; the sequence is RYCWLRRQVR…GIGDSRKDRK (68 aa). The segment at 201 to 243 is disordered; that stretch reads AKDSSKRSSRQTPILYAMLDQTRGKASEKKGKGGIGDSRKDRK. Over residues 222 to 243 the composition is skewed to basic and acidic residues; the sequence is TRGKASEKKGKGGIGDSRKDRK.

This sequence belongs to the myelin P0 protein family.

Its subcellular location is the cell membrane. Functionally, creation of an extracellular membrane face which guides the wrapping process and ultimately compacts adjacent lamellae. In Xenopus tropicalis (Western clawed frog), this protein is Myelin protein P0 (mpz).